A 146-amino-acid polypeptide reads, in one-letter code: DNA-directed RNA polymerase subunit beta (146 aa).

This sequence belongs to the RNA polymerase beta chain family. In terms of assembly, the RNAP catalytic core consists of 2 alpha, 1 beta, 1 beta' and 1 omega subunit. When a sigma factor is associated with the core the holoenzyme is formed, which can initiate transcription.

It carries out the reaction RNA(n) + a ribonucleoside 5'-triphosphate = RNA(n+1) + diphosphate. DNA-dependent RNA polymerase catalyzes the transcription of DNA into RNA using the four ribonucleoside triphosphates as substrates. This chain is DNA-directed RNA polymerase subunit beta (rpoB), found in Liberibacter africanus (Citrus greening disease).